We begin with the raw amino-acid sequence, 733 residues long: Serine/threonine-protein kinase ATG1c (733 aa).

The 258-residue stretch at 12–269 (YLVGRQIGSG…FEEFFNHPFL (258 aa)) folds into the Protein kinase domain. ATP is bound by residues 18 to 26 (IGSGSFSVV) and lysine 41. The active-site Proton acceptor is the aspartate 134. Disordered regions lie at residues 292–363 (SSGS…ELTS) and 379–414 (FETQINSDRRNRREPTGLTDSRSLIAPGRVDDSQDS). Polar residues predominate over residues 329–339 (KKTSSMKSSSG). Basic and acidic residues-rich tracts occupy residues 342–360 (VDTRIERKEVESSPLKHTE) and 379–393 (FETQINSDRRNRREP). The AIM (Atg8-family-interacting motif) signature appears at 419 to 422 (FVLV). 2 disordered regions span residues 565–596 (GSPSQDINKLRSSSLKHDTHSSNKVTDLSHDG) and 713–733 (HRRSSAGQMQGSSLAMMNRQS). Polar residues predominate over residues 566–577 (SPSQDINKLRSS). Residues 579-596 (LKHDTHSSNKVTDLSHDG) show a composition bias toward basic and acidic residues. Residues 717–733 (SAGQMQGSSLAMMNRQS) are compositionally biased toward polar residues.

The protein belongs to the protein kinase superfamily. Ser/Thr protein kinase family.

The protein localises to the cytoplasmic vesicle. It is found in the autophagosome. Functionally, serine/threonine protein kinase involved in autophagy. The ATG1-ATG13 protein kinase complex regulates downstream events required for autophagosome enclosure and/or vacuolar delivery. In Arabidopsis thaliana (Mouse-ear cress), this protein is Serine/threonine-protein kinase ATG1c.